The sequence spans 129 residues: Glutaredoxin-like protein ECU08_1380 (129 aa).

Residues 26–126 (EADYGEMVRR…PLLTQNREPV (101 aa)) enclose the Glutaredoxin domain.

It belongs to the glutaredoxin family.

The protein resides in the cytoplasm. Has a glutathione-disulfide oxidoreductase activity in the presence of NADPH and glutathione reductase. Reduces low molecular weight disulfides and proteins. In Encephalitozoon cuniculi (strain GB-M1) (Microsporidian parasite), this protein is Glutaredoxin-like protein ECU08_1380.